The primary structure comprises 166 residues: Regulator of ribonuclease activity A (166 aa).

The protein belongs to the RraA family. In terms of assembly, homotrimer. Binds to both RNA-binding sites in the C-terminal region of Rne and to RhlB.

The protein localises to the cytoplasm. Functionally, globally modulates RNA abundance by binding to RNase E (Rne) and regulating its endonucleolytic activity. Can modulate Rne action in a substrate-dependent manner by altering the composition of the degradosome. Modulates RNA-binding and helicase activities of the degradosome. The polypeptide is Regulator of ribonuclease activity A (Histophilus somni (strain 129Pt) (Haemophilus somnus)).